Here is a 356-residue protein sequence, read N- to C-terminus: NADH-quinone oxidoreductase subunit H (356 aa).

Helical transmembrane passes span 16–36 (IAVL…AFLL), 52–72 (PNVV…KFVF), 85–105 (LYLL…AVVP), 117–137 (VGIL…IIGG), 163–183 (IGFI…SEII), 201–221 (WPMP…ISAL), 254–274 (FMVG…ILFF), 295–315 (AWYF…FAMV), and 334–354 (IFLP…VYGP).

It belongs to the complex I subunit 1 family. As to quaternary structure, NDH-1 is composed of 14 different subunits. Subunits NuoA, H, J, K, L, M, N constitute the membrane sector of the complex.

The protein localises to the cell inner membrane. It catalyses the reaction a quinone + NADH + 5 H(+)(in) = a quinol + NAD(+) + 4 H(+)(out). Functionally, NDH-1 shuttles electrons from NADH, via FMN and iron-sulfur (Fe-S) centers, to quinones in the respiratory chain. The immediate electron acceptor for the enzyme in this species is believed to be ubiquinone. Couples the redox reaction to proton translocation (for every two electrons transferred, four hydrogen ions are translocated across the cytoplasmic membrane), and thus conserves the redox energy in a proton gradient. This subunit may bind ubiquinone. The chain is NADH-quinone oxidoreductase subunit H from Maricaulis maris (strain MCS10) (Caulobacter maris).